Reading from the N-terminus, the 358-residue chain is Alanine racemase (358 aa).

Lysine 35 serves as the catalytic Proton acceptor; specific for D-alanine. Lysine 35 is modified (N6-(pyridoxal phosphate)lysine). Arginine 130 contacts substrate. Tyrosine 255 functions as the Proton acceptor; specific for L-alanine in the catalytic mechanism. Methionine 303 contributes to the substrate binding site.

The protein belongs to the alanine racemase family. Requires pyridoxal 5'-phosphate as cofactor.

It carries out the reaction L-alanine = D-alanine. It functions in the pathway amino-acid biosynthesis; D-alanine biosynthesis; D-alanine from L-alanine: step 1/1. Functionally, catalyzes the interconversion of L-alanine and D-alanine. May also act on other amino acids. This Shewanella woodyi (strain ATCC 51908 / MS32) protein is Alanine racemase (alr).